A 305-amino-acid polypeptide reads, in one-letter code: LysM and putative peptidoglycan-binding domain-containing protein 3 (305 aa).

The Extracellular segment spans residues 1–216 (MAGRNQNRTV…PYYGADWGIG (216 aa)). N-linked (GlcNAc...) asparagine glycosylation is found at Asn-7 and Asn-26. Ser-55 carries the post-translational modification Phosphoserine. The 45-residue stretch at 65–109 (LTKDIQEGDTLNAVALQYCCTVADIKRVNNLISDQDFFALRSIKI) folds into the LysM domain. A glycan (N-linked (GlcNAc...) asparagine) is linked at Asn-199. Residues 217–237 (WWTAVVIMLIVGIITPVFYLL) form a helical membrane-spanning segment. Residues 238-305 (YYEILAKVDV…PQAHDAQHKT (68 aa)) lie on the Cytoplasmic side of the membrane. Residues 253–305 (VGSSHLHPGLTPPTQHREMENEIGPTKGIPVGQQDDHKLYRQDPQAHDAQHKT) are disordered. Residues 286-305 (QDDHKLYRQDPQAHDAQHKT) are compositionally biased toward basic and acidic residues.

It is found in the cell membrane. It localises to the golgi apparatus. Essential for Golgi structural integrity. The sequence is that of LysM and putative peptidoglycan-binding domain-containing protein 3 (Lysmd3) from Mus musculus (Mouse).